Here is a 454-residue protein sequence, read N- to C-terminus: Uridine kinase (454 aa).

Residue 28–35 coordinates ATP; that stretch reads GPSGSGKT.

It belongs to the uridine kinase family.

It localises to the cytoplasm. The protein localises to the nucleus. The catalysed reaction is uridine + ATP = UMP + ADP + H(+). The enzyme catalyses cytidine + ATP = CMP + ADP + H(+). It participates in pyrimidine metabolism; CTP biosynthesis via salvage pathway; CTP from cytidine: step 1/3. It functions in the pathway pyrimidine metabolism; UMP biosynthesis via salvage pathway; UMP from uridine: step 1/1. Functionally, catalyzes the conversion of uridine into UMP and cytidine into CMP in the pyrimidine salvage pathway. The polypeptide is Uridine kinase (urk1) (Schizosaccharomyces pombe (strain 972 / ATCC 24843) (Fission yeast)).